We begin with the raw amino-acid sequence, 147 residues long: Phospholipase A2 inhibitor subunit B (147 aa).

The C-type lectin domain maps to 62 to 143 (EICEEAGGHI…DEKLLVVCEF (82 aa)). Cystine bridges form between Cys64/Cys141 and Cys119/Cys133. Asn103 carries an N-linked (GlcNAc...) asparagine glycan.

It belongs to the alpha-type phospholipase A2 inhibitor family. As to quaternary structure, homo- or heterotrimer; homotrimer of PLI-A chains, two PLI-A and one PLI-B chains, one PLI-A and two PLI-B chains, and homotrimer of PLI-B chains (with a ratio of 1:3:3:1). Expressed by the liver.

The protein resides in the secreted. Functionally, PLI binds directly phospholipase A2 in the presence or absence of calcium. Inhibitory activity of the PLI-B homotrimer is less specific than that of the PLI-A homotrimer. In Protobothrops flavoviridis (Habu), this protein is Phospholipase A2 inhibitor subunit B.